We begin with the raw amino-acid sequence, 72 residues long: Putative membrane protein insertion efficiency factor (72 aa).

This sequence belongs to the UPF0161 family.

The protein localises to the cell inner membrane. Could be involved in insertion of integral membrane proteins into the membrane. The protein is Putative membrane protein insertion efficiency factor of Amoebophilus asiaticus (strain 5a2).